The primary structure comprises 396 residues: MAKEKFERTKPHVNVGTIGHVDHGKTTLTAAITTVLTKKFGGEAKAYDQIDAAPEEKARGITINTAHVEYETANRHYAHVDCPGHADYVKNMITGAAQMDGAILVCSAADGPMPQTREHILLARQVGVPYIIVFLNKCDMVDDAELLELVEMEVRELLSKYDFPGDDTPIVKGSAKLALEGDTGELGEVAIMNLADALDTYIPTPERAVDGAFLMPVEDVFSISGRGTVVTGRVERGIVKVGEEIEIVGIKPTVKTTCTGVEMFRKLLDQGQAGDNVGILLRGTKREDVERGQVLAKPGSITPHTHFTAEVYVLSKDEGGRHTPFFNNYRPQFYFRTTDVTGSIELPKDKEMVMPGDNVSITVKLIAPIAMEEGLRFAIREGGRTVGAGVVAKIIE.

The tr-type G domain maps to 10–206 (KPHVNVGTIG…ALDTYIPTPE (197 aa)). A G1 region spans residues 19–26 (GHVDHGKT). 19–26 (GHVDHGKT) is a binding site for GTP. T26 is a binding site for Mg(2+). The tract at residues 60–64 (GITIN) is G2. A G3 region spans residues 81-84 (DCPG). GTP-binding positions include 81 to 85 (DCPGH) and 136 to 139 (NKCD). The G4 stretch occupies residues 136 to 139 (NKCD). The segment at 174 to 176 (SAK) is G5.

This sequence belongs to the TRAFAC class translation factor GTPase superfamily. Classic translation factor GTPase family. EF-Tu/EF-1A subfamily. In terms of assembly, monomer.

Its subcellular location is the cytoplasm. The catalysed reaction is GTP + H2O = GDP + phosphate + H(+). Its function is as follows. GTP hydrolase that promotes the GTP-dependent binding of aminoacyl-tRNA to the A-site of ribosomes during protein biosynthesis. The polypeptide is Elongation factor Tu (Burkholderia vietnamiensis (strain G4 / LMG 22486) (Burkholderia cepacia (strain R1808))).